Here is a 627-residue protein sequence, read N- to C-terminus: RNA interference defective protein 10 (627 aa).

Disordered stretches follow at residues 1–31 (MSNHRSNFRDYQREGIRANNAGTSGDAVRQN), 467–487 (QRDTDEQYDVHQEGPSNHDQY), and 523–589 (SSVR…SEDY). Composition is skewed to basic and acidic residues over residues 7-16 (NFRDYQREGI), 467-478 (QRDTDEQYDVHQ), and 526-537 (REPEHPSARSRD).

The protein belongs to the maelstrom family. Interacts with rde-11 (via RING-type zinc finger domain). Interacts with ergo-1.

Functionally, in complex with rde-11, required in the endogenous and exogenous siRNA pathway for biogenesis and accumulation of secondary small interfering RNA (siRNA) intermediates, such as 22G-siRNAs derived from ergo-1 targets. This Caenorhabditis elegans protein is RNA interference defective protein 10.